Here is a 70-residue protein sequence, read N- to C-terminus: DNA-directed RNA polymerase subunit epsilon (70 aa).

The protein belongs to the RNA polymerase subunit epsilon family. RNAP is composed of a core of 2 alpha, a beta and a beta' subunit. The core is associated with a delta subunit, and at least one of epsilon or omega. When a sigma factor is associated with the core the holoenzyme is formed, which can initiate transcription.

The catalysed reaction is RNA(n) + a ribonucleoside 5'-triphosphate = RNA(n+1) + diphosphate. Its function is as follows. A non-essential component of RNA polymerase (RNAP). This Enterococcus faecalis (strain ATCC 700802 / V583) protein is DNA-directed RNA polymerase subunit epsilon.